Consider the following 209-residue polypeptide: Rac-like GTP-binding protein ARAC9 (209 aa).

Position 25–32 (25–32 (GDGAVGKT)) interacts with GTP. The short motif at 47–55 (YVPTVFDNF) is the Effector region element. Residues 72–76 (DTAGQ) and 130–133 (TKSD) contribute to the GTP site. Cys206 is modified (cysteine methyl ester). Residue Cys206 is the site of S-geranylgeranyl cysteine attachment. Residues 207-209 (HVL) constitute a propeptide, removed in mature form.

This sequence belongs to the small GTPase superfamily. Rho family. Interacts with SPK1.

It localises to the cytoplasm. The protein localises to the membrane. Inactive GDP-bound Rho GTPases reside in the cytosol, are found in a complex with Rho GDP-dissociation inhibitors (Rho GDIs), and are released from the GDI protein in order to translocate to membranes upon activation. The sequence is that of Rac-like GTP-binding protein ARAC9 (ARAC9) from Arabidopsis thaliana (Mouse-ear cress).